The primary structure comprises 192 residues: Large ribosomal subunit protein bL25 (192 aa).

Belongs to the bacterial ribosomal protein bL25 family. CTC subfamily. Part of the 50S ribosomal subunit; part of the 5S rRNA/L5/L18/L25 subcomplex. Contacts the 5S rRNA. Binds to the 5S rRNA independently of L5 and L18.

This is one of the proteins that binds to the 5S RNA in the ribosome where it forms part of the central protuberance. The polypeptide is Large ribosomal subunit protein bL25 (Solidesulfovibrio magneticus (strain ATCC 700980 / DSM 13731 / RS-1) (Desulfovibrio magneticus)).